The chain runs to 670 residues: Cyclic di-GMP phosphodiesterase PdeA (670 aa).

The EAL domain maps to 428–670 (QNKIFQYILK…GFLWHKPEPI (243 aa)).

It catalyses the reaction 3',3'-c-di-GMP + H2O = 5'-phosphoguanylyl(3'-&gt;5')guanosine + H(+). Phosphodiesterase (PDE) that catalyzes the hydrolysis of cyclic diguanylate (c-di-GMP) to pGpG. This Borreliella burgdorferi (strain ATCC 35210 / DSM 4680 / CIP 102532 / B31) (Borrelia burgdorferi) protein is Cyclic di-GMP phosphodiesterase PdeA.